Reading from the N-terminus, the 502-residue chain is Bone morphogenetic protein receptor type-1B (502 aa).

The N-terminal stretch at 1-13 (MLLRSAGKLNVGT) is a signal peptide. The segment at 1 to 25 (MLLRSAGKLNVGTKKEDGESTAPTP) is disordered. Over 14–126 (KKEDGESTAP…DFVDGPIHHR (113 aa)) the chain is Extracellular. 5 cysteine pairs are disulfide-bonded: C32–C53, C34–C38, C47–C71, C81–C95, and C96–C102. A helical membrane pass occupies residues 127–148 (ALLISVTVCSLLLVLIILFCYF). The Cytoplasmic segment spans residues 149–502 (RYKRQETRPR…KMSESQDIKL (354 aa)). The region spanning 174–203 (ESLRDLIEQSQSSGSGSGLPLLVQRTIAKQ) is the GS domain. The 291-residue stretch at 204–494 (IQMVKQIGKG…LRVKKTLAKM (291 aa)) folds into the Protein kinase domain. Residues 210 to 218 (IGKGRYGEV) and K231 each bind ATP. The active-site Proton acceptor is the D332.

This sequence belongs to the protein kinase superfamily. TKL Ser/Thr protein kinase family. TGFB receptor subfamily. As to quaternary structure, interacts with high affinity with GDF5; positively regulates chondrocyte differentiation. Interacts with SCUBE3. Interacts with TSC22D1/TSC-22. Interacts with TGFBR3. The cofactor is Mg(2+). Mn(2+) serves as cofactor. Autophosphorylated.

The protein localises to the cell membrane. The catalysed reaction is L-threonyl-[receptor-protein] + ATP = O-phospho-L-threonyl-[receptor-protein] + ADP + H(+). The enzyme catalyses L-seryl-[receptor-protein] + ATP = O-phospho-L-seryl-[receptor-protein] + ADP + H(+). In terms of biological role, on ligand binding, forms a receptor complex consisting of two type II and two type I transmembrane serine/threonine kinases. Type II receptors phosphorylate and activate type I receptors which autophosphorylate, then bind and activate SMAD transcriptional regulators. Receptor for BMP7/OP-1 and GDF5. Positively regulates chondrocyte differentiation through GDF5 interaction. This is Bone morphogenetic protein receptor type-1B (BMPR1B) from Homo sapiens (Human).